The primary structure comprises 481 residues: Cobyric acid synthase (481 aa).

The region spanning 248–435 (ALTVAWLAFS…LHGMFGSDRF (188 aa)) is the GATase cobBQ-type domain. Cys330 acts as the Nucleophile in catalysis. His427 is a catalytic residue.

The protein belongs to the CobB/CobQ family. CobQ subfamily.

It participates in cofactor biosynthesis; adenosylcobalamin biosynthesis. In terms of biological role, catalyzes amidations at positions B, D, E, and G on adenosylcobyrinic A,C-diamide. NH(2) groups are provided by glutamine, and one molecule of ATP is hydrogenolyzed for each amidation. The polypeptide is Cobyric acid synthase (Cereibacter sphaeroides (strain ATCC 17025 / ATH 2.4.3) (Rhodobacter sphaeroides)).